We begin with the raw amino-acid sequence, 910 residues long: Short transient receptor potential channel 3 (910 aa).

Residues 1–93 (MSTKVKKCRE…VRGPAFMFGA (93 aa)) are disordered. The Cytoplasmic segment spans residues 1–448 (MSTKVKKCRE…KILRSPFMKF (448 aa)). Residues 19-29 (PEEEEDGEAEG) show a composition bias toward acidic residues. A compositionally biased stretch (pro residues) spans 48–58 (PPCPRAPPSPG). Over residues 59 to 68 (PDASSEGSPS) the composition is skewed to low complexity. ANK repeat units follow at residues 100–129 (AEEE…TLNV), 135–164 (MGQN…LARI), 166–192 (DALL…FAAS), and 221–250 (PDIT…RIER). Glu-147 serves as a coordination point for Ca(2+). Residues 449–466 (VAHAASFIIFLGLLVFNA) form a helical membrane-spanning segment. The Extracellular portion of the chain corresponds to 467 to 497 (SDRFEGITTLPNITVIDYPKQIFRVKTTQFT). Asn-478 is a glycosylation site (N-linked (GlcNAc...) asparagine). A helical transmembrane segment spans residues 498–516 (WTEMLIMVWVLGMMWSECK). 3 residues coordinate Ca(2+): Glu-514, Glu-517, and Asn-532. The Cytoplasmic portion of the chain corresponds to 517-529 (ELWLEGPREYIVQ). The helical transmembrane segment at 530–551 (LWNVLDFGMLSIFIAAFTARFL) threads the bilayer. Over 552-595 (AFLQATKAQQYVDSHVQESDLSEVTLPPEVQYFTYARDKWLPSD) the chain is Extracellular. The helical transmembrane segment at 596 to 619 (PQIISEGLYAIAVVLSFSRIAYIL) threads the bilayer. Topologically, residues 620-638 (PANESFGPLQISLGRTVKD) are cytoplasmic. The stretch at 623–652 (ESFGPLQISLGRTVKDIFKFMVLFIMVFLA) is one ANK 5 repeat. Residues 639-662 (IFKFMVLFIMVFLAFMIGMFILYS) traverse the membrane as a helical segment. The Extracellular portion of the chain corresponds to 663 to 702 (YYLGAKVNPAFTTVEESFKTLFWSIFGLSEVTSVVLKYDH). A helical membrane pass occupies residues 703 to 728 (KFIENIGYVLYGIYNVTMVVVLLNML). Residues 729–910 (IAMINSSYQE…KLNPSVLRCE (182 aa)) are Cytoplasmic-facing. Residues Glu-860, Glu-863, Glu-865, and Asp-872 each coordinate Ca(2+).

This sequence belongs to the transient receptor (TC 1.A.4) family. STrpC subfamily. TRPC3 sub-subfamily. In terms of assembly, homotetramer. Interacts with ITPR1, ITPR3, MX1 and RNF24. Interacts with JPH2; the interaction is involved in maintaining Ca(2+) homeostasis in skeletal muscle and is mediated by JPH2 'Ser-165' phosphorylation. Abundantly expressed in brain. Concentrated in cerebellar Purkinje cells and sparsely localized in cerebellar granule lyer, pontine nuclei and thalamus. Lower levels detected in other tissues.

The protein resides in the cell membrane. It carries out the reaction Ca(2+)(in) = Ca(2+)(out). With respect to regulation, activated by diacylglycerol (DAG) in a membrane-delimited fashion, independently of protein kinase C. Activated by inositol 1,4,5-triphosphate receptors (ITPR) with bound IP3. May be activated by internal calcium store depletion. Inhibited by intracellular Ca(2+). Functionally, forms a receptor-activated non-selective calcium permeant cation channel. May be operated by a phosphatidylinositol second messenger system activated by receptor tyrosine kinases or G-protein coupled receptors. The polypeptide is Short transient receptor potential channel 3 (Trpc3) (Mus musculus (Mouse)).